The primary structure comprises 60 residues: Small ribosomal subunit protein eS31 (60 aa).

Cys27, Cys30, Cys45, and Cys48 together coordinate Zn(2+). The C4-type zinc-finger motif lies at 27–48; the sequence is CPRCGPGVFMAEHLNRYACGKC.

It belongs to the eukaryotic ribosomal protein eS31 family. In terms of assembly, part of the 30S ribosomal subunit. Requires Zn(2+) as cofactor.

This is Small ribosomal subunit protein eS31 from Methanocaldococcus jannaschii (strain ATCC 43067 / DSM 2661 / JAL-1 / JCM 10045 / NBRC 100440) (Methanococcus jannaschii).